The chain runs to 60 residues: Cytotoxin 5 (60 aa).

Disulfide bonds link cysteine 3-cysteine 21, cysteine 14-cysteine 38, cysteine 42-cysteine 53, and cysteine 54-cysteine 59.

This sequence belongs to the three-finger toxin family. Short-chain subfamily. Type IA cytotoxin sub-subfamily. In terms of assembly, monomer in solution; Homodimer and oligomer in the presence of negatively charged lipids forming a pore with a size ranging between 20 and 30 Angstroms. In terms of tissue distribution, expressed by the venom gland.

The protein localises to the secreted. The protein resides in the target cell membrane. In terms of biological role, shows cytolytic activity on many different cells by forming pore in lipid membranes. In vivo, increases heart rate or kills the animal by cardiac arrest. In addition, it binds to heparin with high affinity, interacts with Kv channel-interacting protein 1 (KCNIP1) in a calcium-independent manner, and binds to integrin alpha-V/beta-3 (ITGAV/ITGB3) with moderate affinity. The protein is Cytotoxin 5 of Naja mossambica (Mozambique spitting cobra).